A 712-amino-acid polypeptide reads, in one-letter code: Polyribonucleotide nucleotidyltransferase (712 aa).

Mg(2+) is bound by residues D487 and D493. In terms of domain architecture, KH spans 554-613 (PRIEVMNIPVDKIREVIGSGGKVIREIVEKTGAKINIEDDGTVKIASSSGKEIEAARKWI). Positions 623-691 (GQIYEGTVVK…ERGKVRLSMK (69 aa)) constitute an S1 motif domain.

The protein belongs to the polyribonucleotide nucleotidyltransferase family. It depends on Mg(2+) as a cofactor.

It is found in the cytoplasm. It carries out the reaction RNA(n+1) + phosphate = RNA(n) + a ribonucleoside 5'-diphosphate. Functionally, involved in mRNA degradation. Catalyzes the phosphorolysis of single-stranded polyribonucleotides processively in the 3'- to 5'-direction. This is Polyribonucleotide nucleotidyltransferase from Rhizobium etli (strain CIAT 652).